The sequence spans 340 residues: uncharacterized protein (340 aa).

A signal peptide spans 1 to 23; the sequence is MQKKVLSLVLVLAVLESIVPVSA.

This is an uncharacterized protein from Archaeoglobus fulgidus (strain ATCC 49558 / DSM 4304 / JCM 9628 / NBRC 100126 / VC-16).